The chain runs to 136 residues: Large ribosomal subunit protein uL16 (136 aa).

The protein belongs to the universal ribosomal protein uL16 family. In terms of assembly, part of the 50S ribosomal subunit.

Functionally, binds 23S rRNA and is also seen to make contacts with the A and possibly P site tRNAs. In Pseudoalteromonas atlantica (strain T6c / ATCC BAA-1087), this protein is Large ribosomal subunit protein uL16.